We begin with the raw amino-acid sequence, 34 residues long: Hemopexin (34 aa).

The tract at residues 1–25 is disordered; the sequence is RPLTQHKPHTPGDEHPHGAEPPGXD.

Belongs to the hemopexin family. Expressed by the liver and secreted in plasma.

Its subcellular location is the secreted. Binds heme and transports it to the liver for breakdown and iron recovery, after which the free hemopexin returns to the circulation. This is Hemopexin (HPX) from Gallus gallus (Chicken).